The chain runs to 249 residues: uncharacterized protein (249 aa).

2 helical membrane passes run 49-69 (ILLS…CYLL) and 223-243 (IVMS…VHHL).

The protein resides in the cell membrane. This is an uncharacterized protein from Bacillus anthracis.